Reading from the N-terminus, the 136-residue chain is Single-stranded DNA-binding protein 1 (136 aa).

Residues 4–109 enclose the SSB domain; the sequence is LNKMQLIGNL…IMAKEMQMLG (106 aa). Residues 109-136 form a disordered region; the sequence is GKKQDNNKVGNARHGDALPADEDDYYDF. Residues 127–136 are compositionally biased toward acidic residues; that stretch reads PADEDDYYDF.

Homotetramer.

In Xylella fastidiosa (strain 9a5c), this protein is Single-stranded DNA-binding protein 1 (ssb1).